A 499-amino-acid polypeptide reads, in one-letter code: Putative antiporter subunit mnhD2 (499 aa).

14 helical membrane-spanning segments follow: residues L3–F23, Y33–V53, L79–F99, Y109–S129, L131–L151, I162–L182, I210–L230, L241–F261, I272–I292, I309–F329, L331–I351, F370–F390, G404–F424, and I452–N472.

The protein belongs to the CPA3 antiporters (TC 2.A.63) subunit D family. May form a heterooligomeric complex that consists of seven subunits: mnhA2, mnhB2, mnhC2, mnhD2, mnhE2, mnhF2 and mnhG2.

The protein localises to the cell membrane. Expression of the mnh2 operon in E.coli is not able to catalyze Na(+)Li(+)/H(+) antiport. It does however confer higher growth rates than the control strain at up to pH 9.5. The operon may encode an NADH-ubiquinone oxidoreductase. The protein is Putative antiporter subunit mnhD2 (mnhD2) of Staphylococcus aureus.